The chain runs to 526 residues: Trigger factor (526 aa).

The 82-residue stretch at 162–243 (GDFVSIDLSA…LGSVKERELP (82 aa)) folds into the PPIase FKBP-type domain. Over residues 425 to 460 (DTDGADVDPKEYFGDVEAEGDKADKAETDKAEEKPK) the composition is skewed to basic and acidic residues. The tract at residues 425–526 (DTDGADVDPK…AKKAAEKKED (102 aa)) is disordered. The span at 461 to 517 (KAPAKKSTTKKSTAKKSTAKKSTAKKSTAKKSTAKKSTTKKATKSTAKKSTAKKTTA) shows a compositional bias: basic residues.

The protein belongs to the FKBP-type PPIase family. Tig subfamily.

Its subcellular location is the cytoplasm. The enzyme catalyses [protein]-peptidylproline (omega=180) = [protein]-peptidylproline (omega=0). Its function is as follows. Involved in protein export. Acts as a chaperone by maintaining the newly synthesized protein in an open conformation. Functions as a peptidyl-prolyl cis-trans isomerase. The protein is Trigger factor of Corynebacterium jeikeium (strain K411).